The following is an 84-amino-acid chain: Large ribosomal subunit protein bL27 (84 aa).

The tract at residues 1–20 (MAHKKGGGSTKNGRDSNPKY) is disordered.

Belongs to the bacterial ribosomal protein bL27 family.

This Prosthecochloris vibrioformis (Chlorobium vibrioforme) protein is Large ribosomal subunit protein bL27 (rpmA).